A 580-amino-acid chain; its full sequence is Arginine--tRNA ligase (580 aa).

The 'HIGH' region motif lies at 131–141; it reads ANPTGPMHVGH.

The protein belongs to the class-I aminoacyl-tRNA synthetase family. As to quaternary structure, monomer.

It is found in the cytoplasm. It carries out the reaction tRNA(Arg) + L-arginine + ATP = L-arginyl-tRNA(Arg) + AMP + diphosphate. In Cereibacter sphaeroides (strain KD131 / KCTC 12085) (Rhodobacter sphaeroides), this protein is Arginine--tRNA ligase.